The chain runs to 829 residues: Probable methyltransferase PMT26 (829 aa).

Residues 1–17 lie on the Cytoplasmic side of the membrane; the sequence is MAQPRYTRIDNRRPSSN. A helical; Signal-anchor for type II membrane protein membrane pass occupies residues 18-38; it reads YCSTVTVVVFVALCLVGIWMM. At 39–829 the chain is on the lumenal side; sequence TSSSVGPAQN…EVETLTYAIG (791 aa). Residues 55-258 are disordered; sequence DNKDGIKKQM…TSGDLSPPGA (204 aa). Basic and acidic residues-rich tracts occupy residues 85-143, 151-160, 168-177, and 187-231; these read NEDK…DSKS, LDEKKDLKDN, TNEKQTKPET, and ENQK…KENT. N-linked (GlcNAc...) asparagine glycosylation is found at Asn-215, Asn-247, Asn-264, and Asn-270. Residues 241-252 are compositionally biased toward polar residues; that stretch reads QEGQSKNETSGD. Residues 271–291 form a disordered region; that stretch reads GSFSTQATESKNEKEAQKGSG. Basic and acidic residues predominate over residues 280–291; the sequence is SKNEKEAQKGSG. 4 N-linked (GlcNAc...) asparagine glycosylation sites follow: Asn-302, Asn-579, Asn-595, and Asn-756.

This sequence belongs to the methyltransferase superfamily.

The protein resides in the golgi apparatus membrane. This is Probable methyltransferase PMT26 from Arabidopsis thaliana (Mouse-ear cress).